A 904-amino-acid polypeptide reads, in one-letter code: Protein argonaute 4A (904 aa).

Disordered stretches follow at residues Met1–Ser33 and Lys143–Pro166. The segment covering Leu11–Ala21 has biased composition (pro residues). Positions Ser144 to Pro156 are enriched in low complexity. Positions Pro274–Pro388 constitute a PAZ domain. Residues Phe557–Lys865 form the Piwi domain. Positions Glu871–Leu890 are disordered. Low complexity predominate over residues Thr872–Ala885.

This sequence belongs to the argonaute family. Ago subfamily.

Probably involved in the RNA silencing pathway. May bind to short RNAs such as microRNAs (miRNAs) or short interfering RNAs (siRNAs), and represses the translation of mRNAs which are complementary to them. The sequence is that of Protein argonaute 4A (AGO4A) from Oryza sativa subsp. japonica (Rice).